The primary structure comprises 960 residues: Lon protease homolog, mitochondrial (960 aa).

The transit peptide at 1–56 directs the protein to the mitochondrion; it reads MYRAGALVLRSATLRRTRFLAAHQNFATISSQRSSVLLAKSLESSIGGAGNQKKFY. The Lon N-terminal domain maps to 92 to 352; that stretch reads VPILAINRYP…IALLLIQKEK (261 aa). Residues 195–250 form a disordered region; the sequence is PKTDTPLNGRRARGKRAGLPPTPPPTPPLSTPTSAPEASATSPEEKEEKKDPERKG. A compositionally biased stretch (pro residues) spans 214–224; the sequence is PPTPPPTPPLS. The span at 225 to 236 shows a compositional bias: low complexity; that stretch reads TPTSAPEASATS. The span at 237 to 250 shows a compositional bias: basic and acidic residues; it reads PEEKEEKKDPERKG. 505 to 512 provides a ligand contact to ATP; that stretch reads GPPGVGKT. Residues 712 to 748 are disordered; sequence EQQPEDEQPAATTAISENSDAEPVSTPSDPPTFTPEK. Residues 773–960 enclose the Lon proteolytic domain; the sequence is VTPPGVIMGL…YDELYEHLFQ (188 aa). Catalysis depends on residues Ser867 and Lys910.

Belongs to the peptidase S16 family. As to quaternary structure, homohexamer or homoheptamer. Organized in a ring with a central cavity.

Its subcellular location is the mitochondrion matrix. The enzyme catalyses Hydrolysis of proteins in presence of ATP.. Functionally, ATP-dependent serine protease that mediates the selective degradation of misfolded, unassembled or oxidatively damaged polypeptides as well as certain short-lived regulatory proteins in the mitochondrial matrix. May also have a chaperone function in the assembly of inner membrane protein complexes. Participates in the regulation of mitochondrial gene expression and in the maintenance of the integrity of the mitochondrial genome. Binds to mitochondrial DNA in a site-specific manner. The polypeptide is Lon protease homolog, mitochondrial (Caenorhabditis briggsae).